Reading from the N-terminus, the 471-residue chain is T-box transcription factor T (471 aa).

The T-box DNA-binding region spans 24-196; it reads LWTKFCSLTN…HNPFAKAFLD (173 aa).

In terms of tissue distribution, developing notochord.

Its subcellular location is the nucleus. Involved in the transcriptional regulation of genes required for mesoderm differentiation. The sequence is that of T-box transcription factor T from Halocynthia roretzi (Sea squirt).